Here is a 133-residue protein sequence, read N- to C-terminus: FK506-binding protein 2 (133 aa).

An N-terminal signal peptide occupies residues 1 to 20; the sequence is MKLLYCLLLVILALVGLSSG. The PPIase FKBP-type domain occupies 45–133; sequence GDKLKIHYTG…IFDVELIGIN (89 aa).

This sequence belongs to the FKBP-type PPIase family.

The catalysed reaction is [protein]-peptidylproline (omega=180) = [protein]-peptidylproline (omega=0). Its activity is regulated as follows. Inhibited by both FK506 and rapamycin. Functionally, PPIases accelerate the folding of proteins by catalyzing the cis-trans isomerization of proline imidic peptide bonds in oligopeptides. The chain is FK506-binding protein 2 (fkbp2) from Dictyostelium discoideum (Social amoeba).